The sequence spans 286 residues: Shikimate dehydrogenase (NADP(+)) (286 aa).

Residues 19 to 21 (SFS) and Thr-66 each bind shikimate. Lys-70 functions as the Proton acceptor in the catalytic mechanism. Asn-91 and Asp-107 together coordinate shikimate. Residues 129–133 (GSGGA) and Leu-229 each bind NADP(+). Tyr-231 provides a ligand contact to shikimate. Gly-252 contacts NADP(+).

This sequence belongs to the shikimate dehydrogenase family. Homodimer.

It catalyses the reaction shikimate + NADP(+) = 3-dehydroshikimate + NADPH + H(+). The protein operates within metabolic intermediate biosynthesis; chorismate biosynthesis; chorismate from D-erythrose 4-phosphate and phosphoenolpyruvate: step 4/7. Functionally, involved in the biosynthesis of the chorismate, which leads to the biosynthesis of aromatic amino acids. Catalyzes the reversible NADPH linked reduction of 3-dehydroshikimate (DHSA) to yield shikimate (SA). The chain is Shikimate dehydrogenase (NADP(+)) from Prochlorococcus marinus (strain MIT 9301).